A 433-amino-acid chain; its full sequence is MEYTTQLDAAKKKIITKEMKRVAQKENIDVEILREKIEKGYVVIPANKNHKSLDAHGVGEGLKTKINVNLGISKDCYNIEKEMEKVRVAIDMDAEAIMDLSNYGKTRKFREELIGYSPAMIGSVPMYDCVGMLDKELKDITEEEFLEVVEQHAKDGVDFITIHVGLTRDIAQHLKTTDRITKIVSRGGSLLFAWMIVNNKENPLVTRYDDILEICEKYDVTLSLGDALRPGCINDATDDLQIQELINLSRMAKRAYEKNVQVMIEGPGHVPIDQIEANMKIEKTICNNAPFYVLGPLVTDIAPGYDHITSAIGGAIAASTGADFLCYVTPAEHLRLPNLEDMKEGIIATKIAAHAGDIAKKIPGAKERDDEMSRARFNLDWEKMFELAIDSEKPKKYRKESQPIEEDSCTMCGKMCSMRTVKKVLNGEDVNLI.

Residues asparagine 69, methionine 98, tyrosine 127, histidine 163, 185 to 187, 226 to 229, and glutamate 265 contribute to the substrate site; these read SRG and DALR. Residue histidine 269 participates in Zn(2+) binding. Tyrosine 292 lines the substrate pocket. Histidine 333 serves as a coordination point for Zn(2+). [4Fe-4S] cluster-binding residues include cysteine 409, cysteine 412, and cysteine 416.

Belongs to the ThiC family. The cofactor is [4Fe-4S] cluster.

It catalyses the reaction 5-amino-1-(5-phospho-beta-D-ribosyl)imidazole + S-adenosyl-L-methionine = 4-amino-2-methyl-5-(phosphooxymethyl)pyrimidine + CO + 5'-deoxyadenosine + formate + L-methionine + 3 H(+). The protein operates within cofactor biosynthesis; thiamine diphosphate biosynthesis. Its function is as follows. Catalyzes the synthesis of the hydroxymethylpyrimidine phosphate (HMP-P) moiety of thiamine from aminoimidazole ribotide (AIR) in a radical S-adenosyl-L-methionine (SAM)-dependent reaction. The sequence is that of Phosphomethylpyrimidine synthase from Finegoldia magna (strain ATCC 29328 / DSM 20472 / WAL 2508) (Peptostreptococcus magnus).